The following is a 192-amino-acid chain: Thymidylate kinase (192 aa).

7-14 provides a ligand contact to ATP; that stretch reads GIDCVGKS.

The protein belongs to the thymidylate kinase family.

The catalysed reaction is dTMP + ATP = dTDP + ADP. Phosphorylation of dTMP to form dTDP in both de novo and salvage pathways of dTTP synthesis. This Campylobacter jejuni subsp. doylei (strain ATCC BAA-1458 / RM4099 / 269.97) protein is Thymidylate kinase.